We begin with the raw amino-acid sequence, 274 residues long: Centromere protein K (274 aa).

A disordered region spans residues 1–21; that stretch reads MSGYQHELPPNISKTSPAPEE. Residues 96-159 adopt a coiled-coil conformation; sequence KEELEKIAQE…NQLTAFSEKR (64 aa).

The protein belongs to the CENP-K/MCM22 family.

The protein localises to the nucleus. The protein resides in the chromosome. It localises to the centromere. It is found in the kinetochore. Probable component of a centromeric complex involved in assembly of kinetochore proteins, mitotic progression and chromosome segregation. This chain is Centromere protein K (cenpk), found in Xenopus laevis (African clawed frog).